We begin with the raw amino-acid sequence, 250 residues long: MSDLLCSAKLGAMTLALLLSATSLSALASVTPDRTRLIFNESDKSISVTLRNNDPKLPYLAQSWIEDEKGNKITSPLTVLPPVQRIDSMMNGQVKVQGMPDINKLPADRESMFYFNVREIPPKSNKPNTLQIALQTRIKLFWRPKALEKVSMKSPWQHKVTLTRSGQAFTVNNPTPYYVIISNASAQKNGNPAAGFSPLVIEPKTTVPLNVKMDSVPVLTYVNDFGARMPLFFQCNGNSCQVDEEQSRKG.

The N-terminal stretch at 1–28 is a signal peptide; sequence MSDLLCSAKLGAMTLALLLSATSLSALA.

Belongs to the periplasmic pilus chaperone family.

The protein localises to the periplasm. In terms of biological role, part of the yfcOPQRSUV fimbrial operon. Could contribute to adhesion to various surfaces in specific environmental niches. Increases adhesion to eukaryotic T24 bladder epithelial cells in the absence of fim genes. In Escherichia coli (strain K12), this protein is Probable fimbrial chaperone YfcS (yfcS).